Reading from the N-terminus, the 443-residue chain is GPI mannosyltransferase 1 (443 aa).

11 helical membrane passes run 8–28, 68–88, 90–110, 136–156, 160–180, 232–252, 273–291, 302–322, 347–367, 374–394, and 406–426; these read PFMV…YGAW, PLLA…FSFG, ALFA…LTLT, TRGS…WAVL, IYLG…PFIY, LTLI…LHYG, FSPY…AGAV, FESL…PLVL, SQYF…SSLL, IAVA…GYLL, and LFLA…VIVA.

Belongs to the PIGM family.

It is found in the endoplasmic reticulum membrane. It participates in glycolipid biosynthesis; glycosylphosphatidylinositol-anchor biosynthesis. In terms of biological role, mannosyltransferase involved in glycosylphosphatidylinositol-anchor biosynthesis. Transfers the first alpha-1,4-mannose to GlcN-acyl-PI during GPI precursor assembly. Required for cell wall integrity. The protein is GPI mannosyltransferase 1 (gpi14) of Emericella nidulans (strain FGSC A4 / ATCC 38163 / CBS 112.46 / NRRL 194 / M139) (Aspergillus nidulans).